The sequence spans 200 residues: Probable nicotinate-nucleotide adenylyltransferase (200 aa).

The protein belongs to the NadD family.

It carries out the reaction nicotinate beta-D-ribonucleotide + ATP + H(+) = deamido-NAD(+) + diphosphate. Its pathway is cofactor biosynthesis; NAD(+) biosynthesis; deamido-NAD(+) from nicotinate D-ribonucleotide: step 1/1. Functionally, catalyzes the reversible adenylation of nicotinate mononucleotide (NaMN) to nicotinic acid adenine dinucleotide (NaAD). The protein is Probable nicotinate-nucleotide adenylyltransferase of Clavibacter sepedonicus (Clavibacter michiganensis subsp. sepedonicus).